The chain runs to 476 residues: MEDDGYYLDTDLDLSFTSTATDRTFTSSSARSSLARSSLTLSFNDRLSTATTPSTTTSSAATTLHHRRYDPHWTSIRAATTLSSDGRLHLRHFKLVRHLGTGNLGRVFLCHLRDCPNPTGFALKVIDRDVLTAKKISHVETEAEILSLLDHPFLPTLYARIDASHYTCLLIDYCPNGDLHSLLRKQPNNRLPISPVRFFAAEVLVALEYLHALGIVYRDLKPENILIREDGHIMLSDFDLCFKADVVPTFRSRRFRRTSSSPRKTRRGGGCFSTEVEYEREEIVAEFAAEPVTAFSKSCVGTHEYLAPELVAGNGHGSGVDWWAFGIFLYEMLYGTTPFKGGTKEQTLRNIVSNDDVAFTLEEEGMVEAKDLIEKLLVKDPRKRLGCARGAQDIKRHEFFEGIKWPLIRNYKPPEIRGLVKKTKAHAGHVTAAVTPRRNKWLWWALSHLLRSKSLSKSSSKIQSNNNYYHYVGKKL.

The Protein kinase domain occupies 93 to 400 (FKLVRHLGTG…AQDIKRHEFF (308 aa)). Residues 99–107 (LGTGNLGRV) and Lys124 each bind ATP. Asp219 (proton acceptor) is an active-site residue.

The protein belongs to the protein kinase superfamily. Ser/Thr protein kinase family. In terms of tissue distribution, expressed in root tips and lateral root primordia.

The protein resides in the cytoplasm. It localises to the cytosol. The enzyme catalyses L-seryl-[protein] + ATP = O-phospho-L-seryl-[protein] + ADP + H(+). It carries out the reaction L-threonyl-[protein] + ATP = O-phospho-L-threonyl-[protein] + ADP + H(+). Its function is as follows. Serine/threonine-protein kinase involved in the regulation of auxin signaling. Acts as a positive regulator of cellular auxin efflux and regulates organ development by enhancing PIN-mediated polar auxin transport. Phosphorylates conserved serine residues in the PIN auxin efflux carriers. Phosphorylation of PIN proteins is required and sufficient for apical-basal PIN polarity that enables directional intercellular auxin fluxes, which mediate differential growth, tissue patterning and organogenesis. Acts as a suppressor of root waving. This chain is Serine/threonine-protein kinase WAG1 (WAG1), found in Arabidopsis thaliana (Mouse-ear cress).